The chain runs to 198 residues: FMN-dependent NADH:quinone oxidoreductase (198 aa).

96–99 is an FMN binding site; sequence MYNF.

Belongs to the azoreductase type 1 family. In terms of assembly, homodimer. It depends on FMN as a cofactor.

It catalyses the reaction 2 a quinone + NADH + H(+) = 2 a 1,4-benzosemiquinone + NAD(+). The enzyme catalyses N,N-dimethyl-1,4-phenylenediamine + anthranilate + 2 NAD(+) = 2-(4-dimethylaminophenyl)diazenylbenzoate + 2 NADH + 2 H(+). Its function is as follows. Quinone reductase that provides resistance to thiol-specific stress caused by electrophilic quinones. Functionally, also exhibits azoreductase activity. Catalyzes the reductive cleavage of the azo bond in aromatic azo compounds to the corresponding amines. This is FMN-dependent NADH:quinone oxidoreductase from Burkholderia mallei (strain ATCC 23344).